Reading from the N-terminus, the 543-residue chain is Secreted effector protein SptP (543 aa).

The chaperone-binding stretch occupies residues 35–139; sequence TDKAYVAPEK…FINIIKNKDN (105 aa). One can recognise a Bacterial Rho-GAP domain in the interval 162-293; sequence DVGAESKQPL…TAEFEKIKAG (132 aa). In terms of domain architecture, Tyrosine-protein phosphatase spans 315 to 543; the sequence is IPINQQTQVK…QAQLLMTTAS (229 aa). Cys481 acts as the Phosphocysteine intermediate in catalysis.

In terms of assembly, forms a complex with SicP.

It is found in the secreted. The protein localises to the host cytoplasm. It catalyses the reaction O-phospho-L-tyrosyl-[protein] + H2O = L-tyrosyl-[protein] + phosphate. Functionally, effector proteins function to alter host cell physiology and promote bacterial survival in host tissues. This protein includes tyrosine phosphatase and GTPase activating protein (GAP) activities. After bacterial internalization, GAP mediates the reversal of the cytoskeletal changes induced by SopE. This function is independent of its tyrosine phosphatase activity, which remains unclear. This Salmonella paratyphi A (strain ATCC 9150 / SARB42) protein is Secreted effector protein SptP (sptP).